Consider the following 184-residue polypeptide: MADQLTDDQISEFKEAFSLFDKDGDGCITTKELGTVMRSLGQNPTEAELQDMINEVDADGNGTIDFPEFLNLMARKMKDTDSEEELKEAFRVFDKDQNGFISAAELRHVMTNLGEKLTDEEVDEMIREADVDGDGQINYEEFVKVMMANRRRRRIEESKRSVNSNISRSNNGRKVRKRDRCTIL.

EF-hand domains follow at residues 8–43 (DQIS…LGQN), 44–79 (PTEA…KMKD), 81–116 (DSEE…LGEK), and 117–152 (LTDE…NRRR). Ca(2+) is bound by residues D21, D23, D25, C27, E32, D57, D59, N61, T63, E68, D94, D96, N98, and E105. Position 116 is an N6,N6,N6-trimethyllysine (K116). The Ca(2+) site is built by D130, D132, D134, Q136, and E141. The interval 156–184 (EESKRSVNSNISRSNNGRKVRKRDRCTIL) is disordered. The span at 161–170 (SVNSNISRSN) shows a compositional bias: low complexity. Basic residues predominate over residues 171 to 184 (NGRKVRKRDRCTIL).

The protein belongs to the calmodulin family.

Functionally, calmodulin mediates the control of a large number of enzymes, ion channels and other proteins by Ca(2+). Among the enzymes to be stimulated by the calmodulin-Ca(2+) complex are a number of protein kinases and phosphatases. This chain is Calmodulin-related protein (CAM53), found in Petunia hybrida (Petunia).